The chain runs to 491 residues: NADPH:adrenodoxin oxidoreductase, mitochondrial (491 aa).

A mitochondrion-targeting transit peptide spans 1-32 (MASRCWRWWGWSAWPRTRLPPAGSTPSFCHHF). FAD contacts are provided by Ala-49, Glu-69, Leu-77, and Val-113. NADP(+) contacts are provided by residues 184 to 187 (QGNV), 228 to 229 (RR), and Glu-240. Phosphoserine is present on residues Ser-310 and Ser-317. FAD is bound by residues Trp-398 and 405–407 (GVI). Gly-405 contacts NADP(+).

It belongs to the ferredoxin--NADP reductase type 1 family. In terms of assembly, monomer. Interacts directly with FDX1. FAD is required as a cofactor.

Its subcellular location is the mitochondrion. It is found in the mitochondrion inner membrane. It catalyses the reaction 2 reduced [adrenodoxin] + NADP(+) + H(+) = 2 oxidized [adrenodoxin] + NADPH. The catalysed reaction is 2 reduced [2Fe-2S]-[ferredoxin] + NADP(+) + H(+) = 2 oxidized [2Fe-2S]-[ferredoxin] + NADPH. Its pathway is steroid metabolism; cholesterol metabolism. Its function is as follows. Serves as the first electron transfer protein in all the mitochondrial P450 systems including cholesterol side chain cleavage in all steroidogenic tissues, steroid 11-beta hydroxylation in the adrenal cortex, 25-OH-vitamin D3-24 hydroxylation in the kidney, and sterol C-27 hydroxylation in the liver. Also acts as a ferredoxin--NADP(+) reductase essential for coenzyme Q biosynthesis: together with FDX2, transfers the electrons required for the hydroxylation reaction performed by COQ6. The polypeptide is NADPH:adrenodoxin oxidoreductase, mitochondrial (Homo sapiens (Human)).